Reading from the N-terminus, the 372-residue chain is N-methyl-L-tryptophan oxidase (372 aa).

An FAD-binding site is contributed by 4–34 (DLIIIGSGSVGAAAGYYATRAGLNVLMTDAH). An S-8alpha-FAD cysteine modification is found at cysteine 308.

This sequence belongs to the MSOX/MTOX family. MTOX subfamily. As to quaternary structure, monomer. The cofactor is FAD.

The enzyme catalyses N(alpha)-methyl-L-tryptophan + O2 + H2O = L-tryptophan + formaldehyde + H2O2. Functionally, catalyzes the oxidative demethylation of N-methyl-L-tryptophan. The chain is N-methyl-L-tryptophan oxidase from Escherichia coli O139:H28 (strain E24377A / ETEC).